Here is a 308-residue protein sequence, read N- to C-terminus: GDP-L-colitose synthase (308 aa).

NADP(+) is bound by residues 7–13 (GAGGMVG) and 101–104 (LGSS). Y132 acts as the Proton donor/acceptor in catalysis. NADP(+) is bound by residues K136, 160 to 163 (PCNL), and H176. Substrate is bound by residues K184, W199, and R206.

Belongs to the NAD(P)-dependent epimerase/dehydratase family. Fucose synthase subfamily. As to quaternary structure, homodimer.

It carries out the reaction GDP-beta-L-colitose + NAD(+) = GDP-4-dehydro-3,6-dideoxy-alpha-D-mannose + NADH + H(+). The catalysed reaction is GDP-beta-L-colitose + NADP(+) = GDP-4-dehydro-3,6-dideoxy-alpha-D-mannose + NADPH + H(+). Its pathway is nucleotide-sugar metabolism; GDP-L-colitose biosynthesis. Involved in the biosynthesis of the L-colitose (3,6-dideoxyl-L-xylo-hexose) present in the O-antigen region of lipopolysaccharides (LPS) where it serves as antigenic determinant and are vital for bacterial defense and survival. Catalyzes the two-step NADP-dependent conversion of GDP-4-keto-3,6-dideoxy-D-mannose to GDP-L-colitose. ColC is a bifunctional enzyme catalyzing the C-5 epimerization of GDP-4-keto-3,6-dideoxy-D-mannose and the subsequent C-4 keto reduction of the resulting L-epimer to give GDP-L-colitose. It can use both NADP(+) and NAD(+) as electron acceptor, with a slight preference for NADP(+). This chain is GDP-L-colitose synthase, found in Yersinia pseudotuberculosis.